The following is a 513-amino-acid chain: Microcin J25-processing protein McjC (513 aa).

The Asparagine synthetase domain maps to 176-436 (STIDSIIDNI…FGSDIFWKKT (261 aa)).

Its subcellular location is the cytoplasm. In terms of biological role, along with McjB, necessary and sufficient to process the inactive microcin J25 (McjA) precursor into the active peptide. May be involved in the formation of the amide bond between Gly-38 and Glu-53 of McjA. The polypeptide is Microcin J25-processing protein McjC (mcjC) (Escherichia coli).